The primary structure comprises 290 residues: 4-diphosphocytidyl-2-C-methyl-D-erythritol kinase (290 aa).

Residue K8 is part of the active site. ATP is bound at residue 89 to 99 (PIGAGVGGGSS). D131 is a catalytic residue.

The protein belongs to the GHMP kinase family. IspE subfamily.

The catalysed reaction is 4-CDP-2-C-methyl-D-erythritol + ATP = 4-CDP-2-C-methyl-D-erythritol 2-phosphate + ADP + H(+). The protein operates within isoprenoid biosynthesis; isopentenyl diphosphate biosynthesis via DXP pathway; isopentenyl diphosphate from 1-deoxy-D-xylulose 5-phosphate: step 3/6. In terms of biological role, catalyzes the phosphorylation of the position 2 hydroxy group of 4-diphosphocytidyl-2C-methyl-D-erythritol. The protein is 4-diphosphocytidyl-2-C-methyl-D-erythritol kinase of Chlamydia felis (strain Fe/C-56) (Chlamydophila felis).